The primary structure comprises 256 residues: uncharacterized protein (256 aa).

Belongs to the glycosyltransferase 2 family.

This is an uncharacterized protein from Acanthamoeba polyphaga mimivirus (APMV).